A 284-amino-acid polypeptide reads, in one-letter code: Bifunctional protein FolD (284 aa).

NADP(+) contacts are provided by residues 165–167 (GRS), serine 190, and isoleucine 231.

This sequence belongs to the tetrahydrofolate dehydrogenase/cyclohydrolase family. Homodimer.

It carries out the reaction (6R)-5,10-methylene-5,6,7,8-tetrahydrofolate + NADP(+) = (6R)-5,10-methenyltetrahydrofolate + NADPH. The enzyme catalyses (6R)-5,10-methenyltetrahydrofolate + H2O = (6R)-10-formyltetrahydrofolate + H(+). Its pathway is one-carbon metabolism; tetrahydrofolate interconversion. Functionally, catalyzes the oxidation of 5,10-methylenetetrahydrofolate to 5,10-methenyltetrahydrofolate and then the hydrolysis of 5,10-methenyltetrahydrofolate to 10-formyltetrahydrofolate. This Lysinibacillus sphaericus (strain C3-41) protein is Bifunctional protein FolD.